We begin with the raw amino-acid sequence, 65 residues long: MPKMKTKSSAKKRFKVTGSGKIKRKHAFKSHILTKKSKKRKLALTHSALVHATDMKSIKQQLRII.

The tract at residues 1–22 is disordered; sequence MPKMKTKSSAKKRFKVTGSGKI.

This sequence belongs to the bacterial ribosomal protein bL35 family.

This is Large ribosomal subunit protein bL35 from Flavobacterium psychrophilum (strain ATCC 49511 / DSM 21280 / CIP 103535 / JIP02/86).